The following is a 340-amino-acid chain: UDP-glucose 4-epimerase (340 aa).

NAD(+)-binding positions include 12 to 13, 32 to 37, 59 to 60, 81 to 85, Asn100, Ser125, Tyr150, Lys154, and Phe179; these read FI, DNYGNS, DV, and FAGLK. Substrate-binding residues include Ser125 and Tyr150. The active-site Proton acceptor is Tyr150. Substrate contacts are provided by residues Asn180, 200 to 201, 217 to 219, Arg232, and 292 to 295; these read NL, QVY, and RPGD.

The protein belongs to the NAD(P)-dependent epimerase/dehydratase family. In terms of assembly, homodimer. NAD(+) serves as cofactor.

The catalysed reaction is UDP-alpha-D-glucose = UDP-alpha-D-galactose. The protein operates within carbohydrate metabolism; galactose metabolism. Its function is as follows. Involved in the metabolism of galactose. Catalyzes the conversion of UDP-galactose (UDP-Gal) to UDP-glucose (UDP-Glc) through a mechanism involving the transient reduction of NAD. Can also epimerize UDP-GalNAc to UDP-GlcNAc. Involved in the lacto-N-biose I/galacto-N-biose (LNB/GNB) degradation pathway, which is important for host intestinal colonization by bifidobacteria. The sequence is that of UDP-glucose 4-epimerase (lnpD) from Bifidobacterium longum subsp. longum (strain ATCC 15707 / DSM 20219 / JCM 1217 / NCTC 11818 / E194b).